Here is a 1097-residue protein sequence, read N- to C-terminus: Cyclin-T (1097 aa).

Disordered stretches follow at residues 319–782, 804–936, and 985–1097; these read SNIT…SNGI, LLKP…SLQA, and AAPV…YNKK. Basic and acidic residues predominate over residues 332–350; it reads DSRDRDRDRERERERERDP. Composition is skewed to low complexity over residues 373-390, 420-456, 467-478, and 489-511; these read SSSV…SSSS, PSSH…GRPS, GMPPVGVGMPPH, and PQQP…SGMS. The segment covering 580 to 591 has biased composition (polar residues); it reads LPYSQSQSYGHM. The span at 592–606 shows a compositional bias: low complexity; sequence QQQPVPQSQQQQMPP. The segment covering 609-620 has biased composition (polar residues); it reads SQHSLQSKNSLF. A compositionally biased stretch (basic and acidic residues) spans 652–675; that stretch reads HDYKLNSHPRDKESPKKERLTPTK. Positions 687 to 698 are enriched in low complexity; it reads GSGNSSSGSGSS. Residues 860–870 show a composition bias toward basic and acidic residues; that stretch reads GEIKEESSSKS. The segment covering 871-883 has biased composition (basic residues); the sequence is EKKKKKDKHKHKE. Residues 884 to 895 show a composition bias toward basic and acidic residues; it reads KDKSKDKTEKEE. A Phosphoserine modification is found at Ser916. Residues 993–1007 are compositionally biased toward gly residues; that stretch reads GAGGGGYSSSGGSSS. Basic and acidic residues predominate over residues 1016–1031; sequence SDRDRDKESKKNKSQD. Over residues 1037–1050 the composition is skewed to gly residues; sequence GAGGGIFNPLGGAG. Residues 1087–1097 are compositionally biased toward pro residues; sequence APPPMPVYNKK.

This sequence belongs to the cyclin family. Cyclin C subfamily. Component of the super elongation complex (SEC), at least composed of Ell, Cdk9, cyclin-T (CycT), lilli and ear. Associates with CDK9 to form P-TEFb.

It is found in the nucleus. Its function is as follows. Regulatory subunit of the cyclin-dependent kinase pair (CDK9/cyclin T) complex, also called positive transcription elongation factor B (P-TEFb), which is proposed to facilitate the transition from abortive to production elongation by phosphorylating the CTD (carboxy-terminal domain) of the large subunit of RNA polymerase II (RNAP II). In Drosophila melanogaster (Fruit fly), this protein is Cyclin-T (CycT).